The following is a 207-amino-acid chain: Dephospho-CoA kinase (207 aa).

Residues 5–203 form the DPCK domain; the sequence is AVGLTGGVAC…ARYRALASVF (199 aa). 13 to 18 provides a ligand contact to ATP; sequence ACGKSL.

This sequence belongs to the CoaE family.

It is found in the cytoplasm. It carries out the reaction 3'-dephospho-CoA + ATP = ADP + CoA + H(+). Its pathway is cofactor biosynthesis; coenzyme A biosynthesis; CoA from (R)-pantothenate: step 5/5. Its function is as follows. Catalyzes the phosphorylation of the 3'-hydroxyl group of dephosphocoenzyme A to form coenzyme A. The protein is Dephospho-CoA kinase of Xylella fastidiosa (strain Temecula1 / ATCC 700964).